A 347-amino-acid polypeptide reads, in one-letter code: Ryncolin-2 (347 aa).

The signal sequence occupies residues 1-19 (MKPWAAFHLIFLVASSLEG). The disordered stretch occupies residues 49–115 (LQSQPGIPGI…DKGDKGDKGD (67 aa)). Positions 57–114 (GIPGVPGINGSEGLKGDPGPQGLPGETGFDGIPGVAGPKGDKGDQGDKGDKGDKGDKG) constitute a Collagen-like domain. Over residues 95–115 (KGDKGDQGDKGDKGDKGDKGD) the composition is skewed to basic and acidic residues. One can recognise a Fibrinogen C-terminal domain in the interval 121–341 (DCPPTDVEVR…YADMKIRPQQ (221 aa)). 2 cysteine pairs are disulfide-bonded: Cys132/Cys160 and Cys284/Cys297.

This sequence belongs to the ficolin lectin family. Veficolin subfamily. Hydroxylated, possibly at Pro-74 and Pro-94. In terms of tissue distribution, expressed by the venom duct.

It is found in the secreted. Initiates complement activation and/or interferes in platelet aggregation and/or blood coagulation. The polypeptide is Ryncolin-2 (Cerberus rynchops (Dog-faced water snake)).